The sequence spans 1390 residues: DNA-directed RNA polymerase subunit beta (1390 aa).

A disordered region spans residues 556 to 576 (KLADQDAENDPDSDLGTKSSN).

Belongs to the RNA polymerase beta chain family. In terms of assembly, the RNAP catalytic core consists of 2 alpha, 1 beta, 1 beta' and 1 omega subunit. When a sigma factor is associated with the core the holoenzyme is formed, which can initiate transcription.

The catalysed reaction is RNA(n) + a ribonucleoside 5'-triphosphate = RNA(n+1) + diphosphate. Its function is as follows. DNA-dependent RNA polymerase catalyzes the transcription of DNA into RNA using the four ribonucleoside triphosphates as substrates. This chain is DNA-directed RNA polymerase subunit beta, found in Mycoplasmoides gallisepticum (strain R(low / passage 15 / clone 2)) (Mycoplasma gallisepticum).